The chain runs to 1161 residues: Mitogen-activated protein kinase kinase kinase (1161 aa).

Positions G56–P120 constitute an SH3 domain. A Protein kinase domain is found at L142 to I402. ATP is bound by residues I148 to V156 and K169. The active-site Proton acceptor is D264. At T300 the chain carries Phosphothreonine; by autocatalysis. S304 is modified (phosphoserine; by autocatalysis). Leucine-zipper stretches follow at residues I426–L447 and L461–M482. Phosphoserine is present on residues S525 and S560. Disordered regions lie at residues S560–G615 and T658–N678. Polar residues predominate over residues A571–A583. The segment covering Q591–L601 has biased composition (low complexity). Phosphoserine occurs at positions 685, 773, and 792. Residues G790 to N830 form a disordered region. Over residues N812–N830 the composition is skewed to polar residues. Phosphothreonine is present on T862. Disordered stretches follow at residues R988 to N1014, E1045 to S1093, and G1137 to C1161. The segment covering S989–T1010 has biased composition (low complexity). S993 carries the post-translational modification Phosphoserine. A compositionally biased stretch (basic residues) spans N1052 to K1063. A compositionally biased stretch (basic and acidic residues) spans G1073–H1086. Residues P1150–C1161 are compositionally biased toward polar residues.

The protein belongs to the protein kinase superfamily. STE Ser/Thr protein kinase family. MAP kinase kinase kinase subfamily. In terms of assembly, homodimer. Mg(2+) is required as a cofactor. Autophosphorylation on serine and threonine residues within the activation loop plays a role in enzyme activation. Expressed both maternally and zygotically. Expressed uniformly in large quantities in the early embryo (stages 1-4). In the late embryo, expression is ubiquitous, but expression levels are dramatically reduced. Expressed in the adult head and thorax, and in S2 cells.

The catalysed reaction is L-seryl-[protein] + ATP = O-phospho-L-seryl-[protein] + ADP + H(+). It carries out the reaction L-threonyl-[protein] + ATP = O-phospho-L-threonyl-[protein] + ADP + H(+). With respect to regulation, homodimerization via the leucine zipper domains is required for autophosphorylation and subsequent activation. Activated by C6-ceramide. Its function is as follows. Activates the JUN N-terminal pathway during dorsal closure. The sequence is that of Mitogen-activated protein kinase kinase kinase from Drosophila melanogaster (Fruit fly).